The chain runs to 349 residues: Probable dual-specificity RNA methyltransferase RlmN (349 aa).

E94 (proton acceptor) is an active-site residue. The Radical SAM core domain occupies 100-324 (YKTHTSICLS…NKNNVNTTIR (225 aa)). Residues C107 and C335 are joined by a disulfide bond. Positions 114, 118, and 121 each coordinate [4Fe-4S] cluster. Residues 161-162 (GE), S193, 216-218 (SLH), and N292 each bind S-adenosyl-L-methionine. The active-site S-methylcysteine intermediate is C335.

Belongs to the radical SAM superfamily. RlmN family. [4Fe-4S] cluster serves as cofactor.

It is found in the cytoplasm. It catalyses the reaction adenosine(2503) in 23S rRNA + 2 reduced [2Fe-2S]-[ferredoxin] + 2 S-adenosyl-L-methionine = 2-methyladenosine(2503) in 23S rRNA + 5'-deoxyadenosine + L-methionine + 2 oxidized [2Fe-2S]-[ferredoxin] + S-adenosyl-L-homocysteine. The catalysed reaction is adenosine(37) in tRNA + 2 reduced [2Fe-2S]-[ferredoxin] + 2 S-adenosyl-L-methionine = 2-methyladenosine(37) in tRNA + 5'-deoxyadenosine + L-methionine + 2 oxidized [2Fe-2S]-[ferredoxin] + S-adenosyl-L-homocysteine. In terms of biological role, specifically methylates position 2 of adenine 2503 in 23S rRNA and position 2 of adenine 37 in tRNAs. The protein is Probable dual-specificity RNA methyltransferase RlmN of Finegoldia magna (strain ATCC 29328 / DSM 20472 / WAL 2508) (Peptostreptococcus magnus).